The primary structure comprises 404 residues: Cysteine desulfurase IscS (404 aa).

Residues 75 to 76 (AT), asparagine 155, glutamine 183, and 203 to 205 (SAH) contribute to the pyridoxal 5'-phosphate site. At lysine 206 the chain carries N6-(pyridoxal phosphate)lysine. Residue threonine 243 participates in pyridoxal 5'-phosphate binding. Residue cysteine 328 is the Cysteine persulfide intermediate of the active site. Cysteine 328 provides a ligand contact to [2Fe-2S] cluster.

The protein belongs to the class-V pyridoxal-phosphate-dependent aminotransferase family. NifS/IscS subfamily. Homodimer. Forms a heterotetramer with IscU, interacts with other sulfur acceptors. It depends on pyridoxal 5'-phosphate as a cofactor.

Its subcellular location is the cytoplasm. The catalysed reaction is (sulfur carrier)-H + L-cysteine = (sulfur carrier)-SH + L-alanine. The protein operates within cofactor biosynthesis; iron-sulfur cluster biosynthesis. Master enzyme that delivers sulfur to a number of partners involved in Fe-S cluster assembly, tRNA modification or cofactor biosynthesis. Catalyzes the removal of elemental sulfur atoms from cysteine to produce alanine. Functions as a sulfur delivery protein for Fe-S cluster synthesis onto IscU, an Fe-S scaffold assembly protein, as well as other S acceptor proteins. The sequence is that of Cysteine desulfurase IscS from Ruthia magnifica subsp. Calyptogena magnifica.